The primary structure comprises 293 residues: CDP-abequose synthase (293 aa).

Thr113 contacts substrate. Tyr130 serves as the catalytic Proton acceptor.

It belongs to the NAD(P)-dependent epimerase/dehydratase family.

It carries out the reaction CDP-alpha-D-abequose + NADP(+) = CDP-4-dehydro-3,6-dideoxy-alpha-D-glucose + NADPH + H(+). It participates in bacterial outer membrane biogenesis; LPS O-antigen biosynthesis. The polypeptide is CDP-abequose synthase (Salmonella muenchen).